A 226-amino-acid polypeptide reads, in one-letter code: UPF0758 protein SPs0978 (226 aa).

In terms of domain architecture, MPN spans 103-225 (SVLTSVQVAE…YYSFREKSTL (123 aa)). Residues His-174, His-176, and Asp-187 each contribute to the Zn(2+) site. Positions 174-187 (HNHPSGNIEPSSND) match the JAMM motif motif.

The protein belongs to the UPF0758 family.

The chain is UPF0758 protein SPs0978 from Streptococcus pyogenes serotype M3 (strain SSI-1).